A 361-amino-acid polypeptide reads, in one-letter code: DNA replication and repair protein RecF (361 aa).

30–37 lines the ATP pocket; sequence GPNGSGKT.

This sequence belongs to the RecF family.

Its subcellular location is the cytoplasm. Its function is as follows. The RecF protein is involved in DNA metabolism; it is required for DNA replication and normal SOS inducibility. RecF binds preferentially to single-stranded, linear DNA. It also seems to bind ATP. The sequence is that of DNA replication and repair protein RecF from Yersinia enterocolitica serotype O:8 / biotype 1B (strain NCTC 13174 / 8081).